The following is a 276-amino-acid chain: SKA complex subunit 1 homolog (276 aa).

Positions 48–78 (VDVSLTAMEAQLQAVRRRLQEEREAFPKAKK) form a coiled coil.

It belongs to the SKA1 family.

In Oryza sativa subsp. japonica (Rice), this protein is SKA complex subunit 1 homolog.